The primary structure comprises 1584 residues: MEDDGSLLPEDELLADALLLEDERDELEDPEFDIKCLLQEAEDDVDPGHSSSVKELDTDADKLKKKTAEDRTQAFHLRQNLSALDKMHEEQELFTEKMRGELRACRQRRDLIDKQQEAVAAEIATEEEAGNMAAVGRLQAVSRRLFAELENERDLQSRTEAVLKESENTMWHIEIQEGRLEAFRTADREEVEATGRRLQVRAAEQLCREQEALGKVERNRLLRIRKSLNTQKELGLRHQKLLEDARKNHKVAVRFLKASLGRIREQEKKEEMECHEYMRRRMDAVVALKGSISANRDTLRKFQAWDRAKAELAEQRVQAEKKAILAQGRDAFRHLVHQRRRQELEAQKRAFEEEQKLRKQEIISRILKEEAEEEKRKKQHPPTSARHRLTLRDKTWNYISDFCKKTTVPTNTYTLDYEAAAGPGPSRLLEVVSSELIQGDPGASSEEETLAEPEISGLWNEDYKPYQVPKEDVDRKPVGGTKMDKDILERTVERLRSRVVHKQVVWGREFQGRPFNSKPELLHFQDFDIGKVYKKKITLVNTTYTINYCKLVGVEEHLRDFIHVDFDPPGPLSAGMSCEVLVTFKPMINKDLEGNISFLAQTGEFSVPLKCSTKKCSLSLDKELIDFGSYVVGETTSRTITLTNVGGLGTTFKFLPASEPCEMDDSQSALKLSSLLTYEDKSLYDKAATSFSEQQLEGTESSQADMQSRKELEKLDKEQEEEQPAEPERLTTVIPPSEEQTEITLGEVTEGEIGPFSSIKVPIVFTPVVPGDVQARFKVTFKNPQCPTLHFRVVGVAIDVPVWVPKPSVDLKICMYDRLYQDSVLVHTRSKAALRLKFEVCKELRAHLELLPKTGYIQAQSSYSVQLKFLPRHSLPEDAGRYFDKETRVLEAPMTIWVADQNKPVGFTVHAIVTTSDLELSPSEVDFGYCTIYEAIRTEISLHNHSLLPQEFGFVRLPKFVDVQPNDGFGTILPLETLQFCVIFQPTKAEEHRFQLTCKSEINRCFKLSCRAVGVHPPLELSHYQIKFAATALYDTSVATVYVINSHLSMSSPTHSKPRIGSEDASPMGPTSFEFLLPPDSPITISPSVGTVWPGKRCLVQVAFRPVLPEKLIRQEALPLLNKEMETKSFRKNMAPQRKDLHGLSFSVLRAQNRDKLFKVSVPHVLEMRKRELRPSSDEYQAARATLLRAFQAKFDTFVVPCVVASGDIKDRKGSEPLSFSPHNTLYLELWCPTVAPSVVVTSHKGKTIFNFGDVAVGHRSIKKISIQNVSPEDLALDFSLLNPNGPFVLLNHSSLLRAGGTQVLVLSFSPHESILAQETLDIITKRGTLTLTLMGTGVASMITCSIEGSVLNMGYVIAGESVSSGFKLQNNSLLPIKFSMHLDSLSSTRGRGQQQLPQFLSSPSQRTEVVGTQNLNGQSVFSVAPVKGVMDPGKTQDFTVTFSPDHESLYFSDKLQVVLFEKKISHQILLKGAACQHMMFVEGGDPLDVPVESLTAIPVFDPRHREEAEELRPILVTLDYIQFDTDTPAPPATRELQVGCIRTTQPSPKKPDHPLMVSALLQLRGDVKETYKVIFVAQVLTGP.

The stretch at 300–379 (RKFQAWDRAK…EAEEEKRKKQ (80 aa)) forms a coiled coil. Positions 692 to 706 (SEQQLEGTESSQADM) are enriched in polar residues. Residues 692 to 739 (SEQQLEGTESSQADMQSRKELEKLDKEQEEEQPAEPERLTTVIPPSEE) form a disordered region. Over residues 707 to 717 (QSRKELEKLDK) the composition is skewed to basic and acidic residues.

It belongs to the CFAP74 family.

The protein resides in the cytoplasm. Its subcellular location is the cytoskeleton. It is found in the cilium axoneme. The protein localises to the flagellum axoneme. In terms of biological role, as part of the central apparatus of the cilium axoneme may play a role in cilium movement. May play an important role in sperm architecture and function. This is Cilia- and flagella-associated protein 74 from Homo sapiens (Human).